Here is a 529-residue protein sequence, read N- to C-terminus: Putative cysteine ligase BshC (529 aa).

Positions 450–485 (VKQTKGLENLEKRLLKAQKRNLSDQLQRVIDLQCEL) form a coiled coil.

The protein belongs to the BshC family.

The chain is Putative cysteine ligase BshC from Flavobacterium johnsoniae (strain ATCC 17061 / DSM 2064 / JCM 8514 / BCRC 14874 / CCUG 350202 / NBRC 14942 / NCIMB 11054 / UW101) (Cytophaga johnsonae).